The primary structure comprises 366 residues: Aminomethyltransferase (366 aa).

Belongs to the GcvT family. As to quaternary structure, the glycine cleavage system is composed of four proteins: P, T, L and H.

The enzyme catalyses N(6)-[(R)-S(8)-aminomethyldihydrolipoyl]-L-lysyl-[protein] + (6S)-5,6,7,8-tetrahydrofolate = N(6)-[(R)-dihydrolipoyl]-L-lysyl-[protein] + (6R)-5,10-methylene-5,6,7,8-tetrahydrofolate + NH4(+). The glycine cleavage system catalyzes the degradation of glycine. This Bacillus cereus (strain ZK / E33L) protein is Aminomethyltransferase.